The primary structure comprises 622 residues: Arginine--tRNA ligase (622 aa).

The 'HIGH' region signature appears at 127–137; sequence ANPVHPLHVGH.

The protein belongs to the class-I aminoacyl-tRNA synthetase family.

The protein resides in the cytoplasm. The catalysed reaction is tRNA(Arg) + L-arginine + ATP = L-arginyl-tRNA(Arg) + AMP + diphosphate. This Ignicoccus hospitalis (strain KIN4/I / DSM 18386 / JCM 14125) protein is Arginine--tRNA ligase.